Consider the following 292-residue polypeptide: Protein/nucleic acid deglycase HchA (292 aa).

Over residues M1 to P12 the composition is skewed to polar residues. Residues M1 to F23 form a disordered region. C190 (nucleophile) is an active-site residue.

It belongs to the peptidase C56 family. HchA subfamily.

Its subcellular location is the cytoplasm. The enzyme catalyses N(omega)-(1-hydroxy-2-oxopropyl)-L-arginyl-[protein] + H2O = lactate + L-arginyl-[protein] + H(+). It carries out the reaction N(6)-(1-hydroxy-2-oxopropyl)-L-lysyl-[protein] + H2O = lactate + L-lysyl-[protein] + H(+). The catalysed reaction is S-(1-hydroxy-2-oxopropyl)-L-cysteinyl-[protein] + H2O = lactate + L-cysteinyl-[protein] + H(+). It catalyses the reaction N(omega)-(1-hydroxy-2-oxoethyl)-L-arginyl-[protein] + H2O = L-arginyl-[protein] + glycolate + H(+). The enzyme catalyses N(6)-(1-hydroxy-2-oxoethyl)-L-lysyl-[protein] + H2O = glycolate + L-lysyl-[protein] + H(+). It carries out the reaction S-(1-hydroxy-2-oxoethyl)-L-cysteinyl-[protein] + H2O = glycolate + L-cysteinyl-[protein] + H(+). The catalysed reaction is N(2)-(1-hydroxy-2-oxopropyl)-dGTP + H2O = lactate + dGTP + H(+). It catalyses the reaction N(2)-(1-hydroxy-2-oxopropyl)-GTP + H2O = lactate + GTP + H(+). The enzyme catalyses N(2)-(1-hydroxy-2-oxopropyl)-GDP + H2O = lactate + GDP + H(+). It carries out the reaction N(2)-(1-hydroxy-2-oxopropyl)-GMP + H2O = lactate + GMP + H(+). The catalysed reaction is N(2)-(1-hydroxy-2-oxoethyl)-dGTP + H2O = dGTP + glycolate + H(+). It catalyses the reaction N(2)-(1-hydroxy-2-oxoethyl)-GTP + H2O = glycolate + GTP + H(+). The enzyme catalyses N(2)-(1-hydroxy-2-oxoethyl)-GDP + H2O = glycolate + GDP + H(+). It carries out the reaction N(2)-(1-hydroxy-2-oxoethyl)-GMP + H2O = glycolate + GMP + H(+). The catalysed reaction is an N(2)-(1-hydroxy-2-oxopropyl)-guanosine in RNA + H2O = a guanosine in RNA + lactate + H(+). It catalyses the reaction an N(2)-(1-hydroxy-2-oxopropyl)-2'-deoxyguanosine in DNA + H2O = a 2'-deoxyguanosine in DNA + lactate + H(+). The enzyme catalyses an N(2)-(1-hydroxy-2-oxoethyl)-guanosine in RNA + H2O = a guanosine in RNA + glycolate + H(+). It carries out the reaction an N(2)-(1-hydroxy-2-oxoethyl)-2'-deoxyguanosine in DNA + H2O = a 2'-deoxyguanosine in DNA + glycolate + H(+). In terms of biological role, protein and nucleotide deglycase that catalyzes the deglycation of the Maillard adducts formed between amino groups of proteins or nucleotides and reactive carbonyl groups of glyoxals. Thus, functions as a protein deglycase that repairs methylglyoxal- and glyoxal-glycated proteins, and releases repaired proteins and lactate or glycolate, respectively. Deglycates cysteine, arginine and lysine residues in proteins, and thus reactivates these proteins by reversing glycation by glyoxals. Acts on early glycation intermediates (hemithioacetals and aminocarbinols), preventing the formation of Schiff bases and advanced glycation endproducts (AGE). Also functions as a nucleotide deglycase able to repair glycated guanine in the free nucleotide pool (GTP, GDP, GMP, dGTP) and in DNA and RNA. Is thus involved in a major nucleotide repair system named guanine glycation repair (GG repair), dedicated to reversing methylglyoxal and glyoxal damage via nucleotide sanitization and direct nucleic acid repair. Plays an important role in protecting cells from carbonyl stress. The chain is Protein/nucleic acid deglycase HchA from Staphylococcus aureus (strain MSSA476).